Consider the following 233-residue polypeptide: Translation initiation factor IF-3 (233 aa).

Disordered regions lie at residues 1–21 (MAIQHRDPRGGGGSRDARTNR) and 184–233 (LQSQ…AAQR). Low complexity predominate over residues 193–211 (AAAAAAPAAAPAAPAAGAP). The span at 212–223 (APAPAPAAPAPA) shows a compositional bias: pro residues. Positions 224-233 (PAAADPAAQR) are enriched in low complexity.

This sequence belongs to the IF-3 family. Monomer.

The protein localises to the cytoplasm. Functionally, IF-3 binds to the 30S ribosomal subunit and shifts the equilibrium between 70S ribosomes and their 50S and 30S subunits in favor of the free subunits, thus enhancing the availability of 30S subunits on which protein synthesis initiation begins. The polypeptide is Translation initiation factor IF-3 (Anaeromyxobacter dehalogenans (strain 2CP-C)).